Here is a 65-residue protein sequence, read N- to C-terminus: Small ribosomal subunit protein eS31 (65 aa).

Zn(2+) is bound by residues Cys-36, Cys-39, Cys-55, and Cys-58. A C4-type zinc finger spans residues 36–58 (CPKCGSVMAFHKEPVPRWHCGKC).

Belongs to the eukaryotic ribosomal protein eS31 family. In terms of assembly, part of the 30S ribosomal subunit. Requires Zn(2+) as cofactor.

The chain is Small ribosomal subunit protein eS31 from Pyrobaculum aerophilum (strain ATCC 51768 / DSM 7523 / JCM 9630 / CIP 104966 / NBRC 100827 / IM2).